Consider the following 374-residue polypeptide: Tryptophan--tRNA ligase (374 aa).

Positions 81 to 89 (PSGPVHIGH) match the 'HIGH' region motif. A 'KMSKS' region motif is present at residues 258-262 (KMSAS).

This sequence belongs to the class-I aminoacyl-tRNA synthetase family.

It is found in the cytoplasm. It catalyses the reaction tRNA(Trp) + L-tryptophan + ATP = L-tryptophyl-tRNA(Trp) + AMP + diphosphate + H(+). In Pyrobaculum arsenaticum (strain DSM 13514 / JCM 11321 / PZ6), this protein is Tryptophan--tRNA ligase.